A 374-amino-acid polypeptide reads, in one-letter code: Putative phosphoserine aminotransferase (374 aa).

L-glutamate is bound at residue Arg-48. Residues Ala-82–Thr-83, Phe-106, Thr-152, Asp-174, and Gln-197 each bind pyridoxal 5'-phosphate. Residue Lys-198 is modified to N6-(pyridoxal phosphate)lysine. Residue Asn-249–Thr-250 participates in pyridoxal 5'-phosphate binding.

Belongs to the class-V pyridoxal-phosphate-dependent aminotransferase family. SerC subfamily. Homodimer. Pyridoxal 5'-phosphate is required as a cofactor.

It localises to the cytoplasm. It carries out the reaction O-phospho-L-serine + 2-oxoglutarate = 3-phosphooxypyruvate + L-glutamate. The catalysed reaction is 4-(phosphooxy)-L-threonine + 2-oxoglutarate = (R)-3-hydroxy-2-oxo-4-phosphooxybutanoate + L-glutamate. It participates in amino-acid biosynthesis; L-serine biosynthesis; L-serine from 3-phospho-D-glycerate: step 2/3. It functions in the pathway cofactor biosynthesis; pyridoxine 5'-phosphate biosynthesis; pyridoxine 5'-phosphate from D-erythrose 4-phosphate: step 3/5. In terms of biological role, catalyzes the reversible conversion of 3-phosphohydroxypyruvate to phosphoserine and of 3-hydroxy-2-oxo-4-phosphonooxybutanoate to phosphohydroxythreonine. In Mycobacterium avium (strain 104), this protein is Putative phosphoserine aminotransferase.